Reading from the N-terminus, the 102-residue chain is Glutaredoxin-C14 (102 aa).

Residues 1-101 (MDKVMRMSSE…PLIKPYQSFH (101 aa)) form the Glutaredoxin domain. An intrachain disulfide couples Cys21 to Cys24.

It belongs to the glutaredoxin family. CC-type subfamily.

It localises to the cytoplasm. Functionally, has a glutathione-disulfide oxidoreductase activity in the presence of NADPH and glutathione reductase. Reduces low molecular weight disulfides and proteins. The chain is Glutaredoxin-C14 (GRXC14) from Arabidopsis thaliana (Mouse-ear cress).